Consider the following 253-residue polypeptide: Chitooligosaccharide deacetylase (253 aa).

Residues H61 and H125 each coordinate Mg(2+).

Belongs to the YdjC deacetylase family. ChbG subfamily. As to quaternary structure, homodimer. Mg(2+) serves as cofactor.

The protein localises to the cytoplasm. The enzyme catalyses N,N'-diacetylchitobiose + H2O = N-acetyl-beta-D-glucosaminyl-(1-&gt;4)-D-glucosamine + acetate. The catalysed reaction is diacetylchitobiose-6'-phosphate + H2O = N'-monoacetylchitobiose-6'-phosphate + acetate. The protein operates within glycan degradation; chitin degradation. In terms of biological role, involved in the degradation of chitin. ChbG is essential for growth on the acetylated chitooligosaccharides chitobiose and chitotriose but is dispensable for growth on cellobiose and chitosan dimer, the deacetylated form of chitobiose. Deacetylation of chitobiose-6-P and chitotriose-6-P is necessary for both the activation of the chb promoter by the regulatory protein ChbR and the hydrolysis of phosphorylated beta-glucosides by the phospho-beta-glucosidase ChbF. Catalyzes the removal of only one acetyl group from chitobiose-6-P to yield monoacetylchitobiose-6-P, the inducer of ChbR and the substrate of ChbF. This chain is Chitooligosaccharide deacetylase, found in Proteus mirabilis (strain HI4320).